A 603-amino-acid chain; its full sequence is Replication protein A 70 kDa DNA-binding subunit (603 aa).

Positions P131 to N152 are disordered. At S160 the chain carries Phosphoserine. Residues W179–S252 constitute a DNA-binding region (OB). Position 420 is a phosphoserine (S420). The segment at C464 to C486 adopts a C4-type zinc-finger fold.

This sequence belongs to the replication factor A protein 1 family. Component of the heterotrimeric canonical replication protein A complex (RPA).

Its subcellular location is the nucleus. Its function is as follows. As part of the heterotrimeric replication protein A complex (RPA/RP-A), binds and stabilizes single-stranded DNA intermediates, that form during DNA replication or upon DNA stress. It prevents their reannealing and in parallel, recruits and activates different proteins and complexes involved in DNA metabolism. Thereby, it plays an essential role both in DNA replication and the cellular response to DNA damage. The polypeptide is Replication protein A 70 kDa DNA-binding subunit (Drosophila melanogaster (Fruit fly)).